A 404-amino-acid polypeptide reads, in one-letter code: Cysteine desulfurase IscS (404 aa).

Pyridoxal 5'-phosphate is bound by residues 75–76 (AT), Asn-155, Gln-183, and 203–205 (SAH). N6-(pyridoxal phosphate)lysine is present on Lys-206. Thr-243 lines the pyridoxal 5'-phosphate pocket. Cys-328 acts as the Cysteine persulfide intermediate in catalysis. Cys-328 serves as a coordination point for [2Fe-2S] cluster.

This sequence belongs to the class-V pyridoxal-phosphate-dependent aminotransferase family. NifS/IscS subfamily. Homodimer. Forms a heterotetramer with IscU, interacts with other sulfur acceptors. The cofactor is pyridoxal 5'-phosphate.

It localises to the cytoplasm. The enzyme catalyses (sulfur carrier)-H + L-cysteine = (sulfur carrier)-SH + L-alanine. It functions in the pathway cofactor biosynthesis; iron-sulfur cluster biosynthesis. In terms of biological role, master enzyme that delivers sulfur to a number of partners involved in Fe-S cluster assembly, tRNA modification or cofactor biosynthesis. Catalyzes the removal of elemental sulfur atoms from cysteine to produce alanine. Functions as a sulfur delivery protein for Fe-S cluster synthesis onto IscU, an Fe-S scaffold assembly protein, as well as other S acceptor proteins. The protein is Cysteine desulfurase IscS of Azotobacter vinelandii (strain DJ / ATCC BAA-1303).